A 172-amino-acid polypeptide reads, in one-letter code: Large ribosomal subunit protein uL10 (172 aa).

This sequence belongs to the universal ribosomal protein uL10 family. As to quaternary structure, part of the ribosomal stalk of the 50S ribosomal subunit. The N-terminus interacts with L11 and the large rRNA to form the base of the stalk. The C-terminus forms an elongated spine to which L12 dimers bind in a sequential fashion forming a multimeric L10(L12)X complex.

In terms of biological role, forms part of the ribosomal stalk, playing a central role in the interaction of the ribosome with GTP-bound translation factors. This Ruegeria sp. (strain TM1040) (Silicibacter sp.) protein is Large ribosomal subunit protein uL10.